Consider the following 505-residue polypeptide: Flagellin (505 aa).

The protein belongs to the bacterial flagellin family.

Its subcellular location is the secreted. It localises to the bacterial flagellum. In terms of biological role, flagellin is the subunit protein which polymerizes to form the filaments of bacterial flagella. This chain is Flagellin (fliC), found in Salmonella dublin.